A 317-amino-acid chain; its full sequence is 17-beta-hydroxysteroid dehydrogenase type 6 (317 aa).

A signal peptide spans 1 to 17 (MWLYLAVLLGLYYLLRW). 33 to 57 (FITGCDSGFGNQLARQLDLRGLRVL) contacts NAD(+). N-linked (GlcNAc...) asparagine glycans are attached at residues Asn-71 and Asn-161. Ser-164 provides a ligand contact to substrate. Tyr-176 acts as the Proton acceptor in catalysis.

It belongs to the short-chain dehydrogenases/reductases (SDR) family.

It localises to the microsome membrane. The protein localises to the endoplasmic reticulum membrane. It catalyses the reaction all-trans-retinol--[retinol-binding protein] + NAD(+) = all-trans-retinal--[retinol-binding protein] + NADH + H(+). It carries out the reaction all-trans-retinol + NAD(+) = all-trans-retinal + NADH + H(+). The catalysed reaction is androsterone + NAD(+) = 5alpha-androstan-3,17-dione + NADH + H(+). The enzyme catalyses testosterone + NAD(+) = androst-4-ene-3,17-dione + NADH + H(+). It catalyses the reaction 5alpha-androstane-3alpha,17beta-diol + NAD(+) = 17beta-hydroxy-5alpha-androstan-3-one + NADH + H(+). It carries out the reaction 17beta-estradiol + NAD(+) = estrone + NADH + H(+). The catalysed reaction is 17beta-estradiol + NADP(+) = estrone + NADPH + H(+). The enzyme catalyses 3alpha-hydroxy-5alpha-pregnan-20-one + NAD(+) = 5alpha-pregnane-3,20-dione + NADH + H(+). It catalyses the reaction 5alpha-androstane-3beta,17beta-diol + NAD(+) = 17beta-hydroxy-5alpha-androstan-3-one + NADH + H(+). It carries out the reaction 3beta-hydroxy-5alpha-androstan-17-one + NAD(+) = 5alpha-androstan-3,17-dione + NADH + H(+). Its function is as follows. NAD-dependent oxidoreductase with broad substrate specificity that shows both oxidative and reductive activity (in vitro). Has 17-beta-hydroxysteroid dehydrogenase activity towards various steroids (in vitro). Converts 5-alpha-androstan-3-alpha,17-beta-diol to androsterone and estradiol to estrone (in vitro). Has 3-alpha-hydroxysteroid dehydrogenase activity towards androsterone (in vitro). Has retinol dehydrogenase activity towards all-trans-retinol (in vitro). Can convert androsterone to epi-androsterone. Androsterone is first oxidized to 5-alpha-androstane-3,17-dione and then reduced to epi-andosterone. Can act on both C-19 and C-21 3-alpha-hydroxysteroids. This Bos taurus (Bovine) protein is 17-beta-hydroxysteroid dehydrogenase type 6 (HSD17B6).